A 180-amino-acid chain; its full sequence is NADH-quinone oxidoreductase subunit I (180 aa).

4Fe-4S ferredoxin-type domains follow at residues 50–80 and 90–119; these read LTRDPDGEERCVACNLCAVACPVGCISLQKA and EFFRINFSRCIFCGLCEEACPTTAIQLTPD. [4Fe-4S] cluster is bound by residues Cys-60, Cys-63, Cys-66, Cys-70, Cys-99, Cys-102, Cys-105, and Cys-109.

This sequence belongs to the complex I 23 kDa subunit family. NDH-1 is composed of 13 different subunits. Subunits NuoA, H, J, K, L, M, N constitute the membrane sector of the complex. [4Fe-4S] cluster is required as a cofactor.

The protein resides in the cell inner membrane. It catalyses the reaction a quinone + NADH + 5 H(+)(in) = a quinol + NAD(+) + 4 H(+)(out). Its function is as follows. NDH-1 shuttles electrons from NADH, via FMN and iron-sulfur (Fe-S) centers, to quinones in the respiratory chain. The immediate electron acceptor for the enzyme in this species is believed to be ubiquinone. Couples the redox reaction to proton translocation (for every two electrons transferred, four hydrogen ions are translocated across the cytoplasmic membrane), and thus conserves the redox energy in a proton gradient. The sequence is that of NADH-quinone oxidoreductase subunit I from Shigella boydii serotype 4 (strain Sb227).